A 250-amino-acid chain; its full sequence is Non-specific acid phosphatase (250 aa).

An N-terminal signal peptide occupies residues 1–20; sequence MKSRYLLFFLPLIVAKYTSA.

This sequence belongs to the class A bacterial acid phosphatase family. In terms of assembly, homodimer.

It localises to the periplasm. The catalysed reaction is a phosphate monoester + H2O = an alcohol + phosphate. This is Non-specific acid phosphatase (phoN) from Salmonella typhi.